Reading from the N-terminus, the 249-residue chain is uncharacterized protein (249 aa).

The protein resides in the cytoplasm. Its subcellular location is the nucleus. This is an uncharacterized protein from Schizosaccharomyces pombe (strain 972 / ATCC 24843) (Fission yeast).